Reading from the N-terminus, the 46-residue chain is Endochitinase 4 (46 aa).

This sequence belongs to the glycosyl hydrolase 19 family. Chitinase class I subfamily.

The enzyme catalyses Random endo-hydrolysis of N-acetyl-beta-D-glucosaminide (1-&gt;4)-beta-linkages in chitin and chitodextrins.. Its function is as follows. Defense against chitin-containing fungal and bacterial pathogens. The polypeptide is Endochitinase 4 (Arachis hypogaea (Peanut)).